Here is a 215-residue protein sequence, read N- to C-terminus: Cytochrome b6 (215 aa).

Residues 32–52 (IFYCFGGIVFTCFLVQVATGF) form a helical membrane-spanning segment. Position 35 (C35) interacts with heme c. Heme b is bound by residues H86 and H100. Helical transmembrane passes span 90–110 (ASMM…TGGF), 116–136 (LTWV…VTGY), and 186–206 (AHTF…FLMI). 2 residues coordinate heme b: H187 and H202.

The protein belongs to the cytochrome b family. PetB subfamily. As to quaternary structure, the 4 large subunits of the cytochrome b6-f complex are cytochrome b6, subunit IV (17 kDa polypeptide, PetD), cytochrome f and the Rieske protein, while the 4 small subunits are PetG, PetL, PetM and PetN. The complex functions as a dimer. Heme b serves as cofactor. Heme c is required as a cofactor.

It localises to the plastid. The protein resides in the chloroplast thylakoid membrane. In terms of biological role, component of the cytochrome b6-f complex, which mediates electron transfer between photosystem II (PSII) and photosystem I (PSI), cyclic electron flow around PSI, and state transitions. The sequence is that of Cytochrome b6 from Trieres chinensis (Marine centric diatom).